Here is a 437-residue protein sequence, read N- to C-terminus: Vacuolar protein sorting-associated protein 4A (437 aa).

The segment at 1 to 84 (MTTSTLQKAI…RSKEKHGKKP (84 aa)) is interaction with CHMP1B. Residues 2–80 (TTSTLQKAID…KDYLRSKEKH (79 aa)) form the MIT domain. The residue at position 8 (lysine 8) is an N6-acetyllysine. Residues 75 to 106 (RSKEKHGKKPVKENQSEGKGSDSDSEGDNPEK) form a disordered region. The span at 84-96 (PVKENQSEGKGSD) shows a compositional bias: basic and acidic residues. 2 positions are modified to phosphoserine: serine 95 and serine 97. Position 167 to 174 (167 to 174 (GPPGTGKS)) interacts with ATP.

It belongs to the AAA ATPase family. As to quaternary structure, proposed to be monomeric or homodimeric in nucleotide-free form and to oligomerize upon binding to ATP to form two stacked hexameric or heptameric rings with a central pore through which ESCRT-III substrates are translocated in an ATP-dependent manner. Interacts with CHMP1A, CHMP1B, CHMP2A, CHMP2B, CHMP3, CHMP4A, CHMP4B, CHMP4C and CHMP6. Interacts with VPS4B; the interaction suggests a heteromeric assembly with VPS4B. Interacts with SPAST. Interacts with IST1. Interacts with ZFYVE19/ANCHR; leading to retain it at midbody. Ubiquitously expressed.

Its subcellular location is the late endosome membrane. The protein resides in the midbody. It is found in the cytoplasm. It localises to the cytoskeleton. The protein localises to the spindle. It carries out the reaction ATP + H2O = ADP + phosphate + H(+). Its function is as follows. Involved in late steps of the endosomal multivesicular bodies (MVB) pathway. Recognizes membrane-associated ESCRT-III assemblies and catalyzes their disassembly, possibly in combination with membrane fission. Redistributes the ESCRT-III components to the cytoplasm for further rounds of MVB sorting. MVBs contain intraluminal vesicles (ILVs) that are generated by invagination and scission from the limiting membrane of the endosome and mostly are delivered to lysosomes enabling degradation of membrane proteins, such as stimulated growth factor receptors, lysosomal enzymes and lipids. It is required for proper accomplishment of various processes including the regulation of endosome size, primary cilium organization, mitotic spindle organization, chromosome segregation, and nuclear envelope sealing and spindle disassembly during anaphase. Involved in cytokinesis: retained at the midbody by ZFYVE19/ANCHR and CHMP4C until abscission checkpoint signaling is terminated at late cytokinesis. It is then released following dephosphorylation of CHMP4C, leading to abscission. VPS4A/B are required for the exosomal release of SDCBP, CD63 and syndecan. Critical for normal erythroblast cytokinesis and correct erythropoiesis. (Microbial infection) In conjunction with the ESCRT machinery also appears to function in topologically equivalent membrane fission events, such as the terminal stages of cytokinesis and enveloped virus budding (HIV-1 and other lentiviruses). The protein is Vacuolar protein sorting-associated protein 4A of Homo sapiens (Human).